We begin with the raw amino-acid sequence, 373 residues long: Ras association domain-containing protein 7 (373 aa).

In terms of domain architecture, Ras-associating spans 6-89; that stretch reads AAMELKVWVD…VQFVLRRTGP (84 aa). The segment at 122-150 is disordered; sequence CEPRKTLTPEPAPSLSRPGPAAPVTPTPG. 2 coiled-coil regions span residues 175–227 and 248–297; these read WEQE…AAEA and QERQ…QFIQ. Positions 300 to 356 are disordered; sequence GAALPPPPRPDRGPPGTQGPLPPAREESLLGAPSESHAGAQPRPRGGPHDAELLEVA.

In terms of assembly, interacts with MAP2K7 and GTP-bound NRAS. Polyubiquitinated and degraded by the proteasome upon prolonged stress stimuli.

It localises to the cytoplasm. The protein resides in the cytoskeleton. It is found in the microtubule organizing center. The protein localises to the centrosome. In terms of biological role, negatively regulates stress-induced JNK activation and apoptosis by promoting MAP2K7 phosphorylation and inhibiting its ability to activate JNK. Following prolonged stress, anti-apoptotic effect stops because of degradation of RASSF7 protein via the ubiquitin-proteasome pathway. Required for the activation of AURKB and chromosomal congression during mitosis where it stimulates microtubule polymerization. This chain is Ras association domain-containing protein 7 (RASSF7), found in Homo sapiens (Human).